The primary structure comprises 355 residues: Protein RecA (355 aa).

69 to 76 provides a ligand contact to ATP; the sequence is GPESSGKT. Residues 329–355 are disordered; that stretch reads AYGLPDREETKREETAQIPDTEKTKDV.

The protein belongs to the RecA family.

Its subcellular location is the cytoplasm. Functionally, can catalyze the hydrolysis of ATP in the presence of single-stranded DNA, the ATP-dependent uptake of single-stranded DNA by duplex DNA, and the ATP-dependent hybridization of homologous single-stranded DNAs. It interacts with LexA causing its activation and leading to its autocatalytic cleavage. The sequence is that of Protein RecA from Desulfotalea psychrophila (strain LSv54 / DSM 12343).